Reading from the N-terminus, the 182-residue chain is Dipetalodipin (182 aa).

A signal peptide spans 1 to 18; sequence MKTIIAAIFLGILMHAFA. 3 disulfide bridges follow: C21–C134, C55–C181, and C87–C103.

This sequence belongs to the calycin superfamily. Triabin family. In terms of tissue distribution, expressed in salivary glands.

The protein resides in the secreted. Its function is as follows. Inhibits platelet aggregation, vasoconstriction, and angiogenesis through binding to distinct eicosanoids involved in inflammation (acts as a scavenger), and has a role in inhibiting host innate immunity by impairing platelet-assisted formation of neutrophil extracellular traps (NETs). Inhibits platelet aggregation by collagen (IC(50)=30 nM), thromboxane A2 mimetic (TXA2 mimetic), or arachidonic acid (AA) without affecting aggregation induced by ADP, convulxin (GP6 agonist), PMA, and ristocetin (vWF-dependent platelet agglutinator). Binds with high affinity to TXA2, TXB2, prostaglandine H2 mimetic (PGH2 mimetic), PGD2, PGJ2, and PGF2alpha. Also interacts with 15(S)-hydroxyeicosatetraenoic acid (HETE), being the first calycin/lipocalin described to date to bind to a derivative of 15-lipoxygenase. Binding is not observed to other prostaglandins, leukotrienes, HETEs, lipids, and biogenic amines. It prevents contraction of rat uterus stimulated by PGF2alpha and induces relaxation of aorta previously contracted with TXA2 mimetic. In addition, it inhibits angiogenesis mediated by 15(S)-HETE and does not enhance inhibition of collagen-induced platelet aggregation by SQ29548 (TXA2 antagonist) and indomethacin. Also impairs platelet-assisted formation of neutrophil extracellular traps (NETs). NETs are web-like structures of DNA and proteins that play an important role in killing of pathogens. In addition, NETs are implicated in thrombus formation. In vivo, this protein exhibits antithrombotic activity in two distinct mice models that are highly dependent on platelets. It is noteworthy that it inhibits thrombosis without promoting excessive bleeding. In Dipetalogaster maximus (Blood-sucking bug), this protein is Dipetalodipin.